We begin with the raw amino-acid sequence, 1128 residues long: Apoptosis-stimulating of p53 protein 2 (1128 aa).

Residues 85-120 (PPNRDIVSGPRSQDPSVKRNGVKVPGEHRRKENGVN) are disordered. The tract at residues 332 to 348 (NLPQQAVSAPSRVAAVG) is interaction with APPBP1. The interval 393–436 (MRSGAASQSKGSKAHPASPDWNPSNADLLPSQGSSVPQSAGTAL) is disordered. Positions 413–433 (WNPSNADLLPSQGSSVPQSAG) are enriched in polar residues. Serine 479, serine 555, serine 568, serine 571, and serine 575 each carry phosphoserine. Disordered regions lie at residues 549 to 596 (QARM…FPPA) and 654 to 705 (NPQQ…LPFL). The span at 562–574 (GQDQVLSPASKQE) shows a compositional bias: polar residues. Residues 654–669 (NPQQHPENIYSCSQGK) show a composition bias toward polar residues. Residues 684–693 (HESHENERIP) show a composition bias toward basic and acidic residues. 3 positions are modified to phosphoserine: serine 697, serine 713, and serine 736. Disordered stretches follow at residues 723–748 (KLSN…GPNI), 802–824 (SLVP…SDVP), and 870–907 (PPPP…KRTN). The SH3-binding signature appears at 866–875 (YPPYPPPPYP). The tract at residues 876-1128 (SGEPEVSEED…RIKPRQRSLA (253 aa)) is mediates interaction with APC2. ANK repeat units follow at residues 958 to 987 (EGIT…NVNA) and 991 to 1020 (DGWT…AVFA). The 63-residue stretch at 1057-1119 (MNKGVIYALW…PRNLLGLYPR (63 aa)) folds into the SH3 domain.

The protein belongs to the ASPP family. Interacts with P53/TP53; the interaction promotes pro-apoptotic activity. Interacts with BCL2. Interacts with protein phosphatase 1. Interacts with RELA NF-kappa-B subunit. This interaction probably prevents the activation of apoptosis, possibly by preventing its interaction with p53/TP53. Interacts with APC2 and APPBP1. Interacts with DDX42 (via the C-terminus); the interaction is not inhibited by TP53BP2 ubiquitination and is independent of p53/TP53.

It localises to the cytoplasm. Its subcellular location is the perinuclear region. The protein resides in the nucleus. Its function is as follows. Regulator that plays a central role in regulation of apoptosis and cell growth via its interactions with proteins such as TP53. Regulates p53/TP53 by enhancing the DNA binding and transactivation function of p53/TP53 on the promoters of proapoptotic genes in vivo. Inhibits the ability of APPBP1 to conjugate NEDD8 to CUL1, and thereby decreases APPBP1 ability to induce apoptosis. Impedes cell cycle progression at G2/M. Its apoptosis-stimulating activity is inhibited by its interaction with DDX42. The sequence is that of Apoptosis-stimulating of p53 protein 2 (Tp53bp2) from Mus musculus (Mouse).